Consider the following 310-residue polypeptide: N-acetyl-gamma-glutamyl-phosphate reductase (310 aa).

C117 is a catalytic residue.

The protein belongs to the NAGSA dehydrogenase family. Type 2 subfamily.

It localises to the cytoplasm. The enzyme catalyses N-acetyl-L-glutamate 5-semialdehyde + phosphate + NADP(+) = N-acetyl-L-glutamyl 5-phosphate + NADPH + H(+). The protein operates within amino-acid biosynthesis; L-arginine biosynthesis; N(2)-acetyl-L-ornithine from L-glutamate: step 3/4. Catalyzes the NADPH-dependent reduction of N-acetyl-5-glutamyl phosphate to yield N-acetyl-L-glutamate 5-semialdehyde. This is N-acetyl-gamma-glutamyl-phosphate reductase from Rhizobium leguminosarum bv. trifolii (strain WSM2304).